Consider the following 139-residue polypeptide: Putative pre-16S rRNA nuclease (139 aa).

This sequence belongs to the YqgF nuclease family.

It is found in the cytoplasm. Its function is as follows. Could be a nuclease involved in processing of the 5'-end of pre-16S rRNA. This Caldanaerobacter subterraneus subsp. tengcongensis (strain DSM 15242 / JCM 11007 / NBRC 100824 / MB4) (Thermoanaerobacter tengcongensis) protein is Putative pre-16S rRNA nuclease.